A 195-amino-acid polypeptide reads, in one-letter code: MISTDAVAPAVDVKGEAGDRAATGNIFLVGMMGAGKTTVGRLLSHFLEKTFYDSDREIQKRTGVSIPTIFEIEGEEGFRRRETEILSELMNARNIILATGGGAVLSGVNRAMLKHGGTVIYLRASIDDLWRRTRHDKNRPLLQTSDPRARLAELFVQRDPLYRETAHIVVESGKRSPRHLAQSLAQQLTISSRTG.

An ATP-binding site is contributed by 33-38; that stretch reads GAGKTT. Thr-37 contacts Mg(2+). The substrate site is built by Asp-55, Arg-79, and Gly-101. Arg-139 lines the ATP pocket. Substrate is bound at residue Arg-158. An ATP-binding site is contributed by Arg-175.

It belongs to the shikimate kinase family. Monomer. Requires Mg(2+) as cofactor.

The protein resides in the cytoplasm. It carries out the reaction shikimate + ATP = 3-phosphoshikimate + ADP + H(+). The protein operates within metabolic intermediate biosynthesis; chorismate biosynthesis; chorismate from D-erythrose 4-phosphate and phosphoenolpyruvate: step 5/7. Its function is as follows. Catalyzes the specific phosphorylation of the 3-hydroxyl group of shikimic acid using ATP as a cosubstrate. In Nitrosospira multiformis (strain ATCC 25196 / NCIMB 11849 / C 71), this protein is Shikimate kinase.